The primary structure comprises 78 residues: D-alanyl carrier protein (78 aa).

Positions 1-78 (MEFREQVLDL…KIVEALEELR (78 aa)) constitute a Carrier domain. Residue S36 is modified to O-(pantetheine 4'-phosphoryl)serine.

It belongs to the DltC family. 4'-phosphopantetheine is transferred from CoA to a specific serine of apo-DCP.

It localises to the cytoplasm. It participates in cell wall biogenesis; lipoteichoic acid biosynthesis. In terms of biological role, carrier protein involved in the D-alanylation of lipoteichoic acid (LTA). The loading of thioester-linked D-alanine onto DltC is catalyzed by D-alanine--D-alanyl carrier protein ligase DltA. The DltC-carried D-alanyl group is further transferred to cell membrane phosphatidylglycerol (PG) by forming an ester bond, probably catalyzed by DltD. D-alanylation of LTA plays an important role in modulating the properties of the cell wall in Gram-positive bacteria, influencing the net charge of the cell wall. This Staphylococcus epidermidis (strain ATCC 35984 / DSM 28319 / BCRC 17069 / CCUG 31568 / BM 3577 / RP62A) protein is D-alanyl carrier protein.